The sequence spans 147 residues: Methylmalonyl-CoA mutase homolog (147 aa).

This sequence to methylmalonyl-CoA mutase.

The protein is Methylmalonyl-CoA mutase homolog of Alkalihalophilus pseudofirmus (strain ATCC BAA-2126 / JCM 17055 / OF4) (Bacillus pseudofirmus).